Here is an 842-residue protein sequence, read N- to C-terminus: Glycogen phosphorylase, muscle form (842 aa).

N-acetylserine is present on Ser-2. Phosphoserine; by PHK; in form phosphorylase A is present on Ser-15. Ser-26 bears the Phosphoserine mark. AMP contacts are provided by Asp-43 and Tyr-76. Tyr-204 and Tyr-227 each carry phosphotyrosine. Residue 310-319 coordinates AMP; sequence RRFKSSKFGC. Residue Ser-430 is modified to Phosphoserine. Phosphotyrosine is present on Tyr-473. Ser-514 carries the phosphoserine modification. An N6-(pyridoxal phosphate)lysine modification is found at Lys-681. 2 positions are modified to phosphoserine: Ser-747 and Ser-748.

Belongs to the glycogen phosphorylase family. In terms of assembly, homodimer. Homotetramer; to form the enzymatically active phosphorylase A. Pyridoxal 5'-phosphate is required as a cofactor. Post-translationally, phosphorylation of Ser-15 converts phosphorylase B (unphosphorylated) to phosphorylase A.

The catalysed reaction is [(1-&gt;4)-alpha-D-glucosyl](n) + phosphate = [(1-&gt;4)-alpha-D-glucosyl](n-1) + alpha-D-glucose 1-phosphate. Allosterically regulated through the non-covalent binding of metabolites, being activated by AMP and inhibited by ATP, ADP, and glucose-6-phosphate. The activity is also controlled by post-translational modifications including phosphorylation. In terms of biological role, allosteric enzyme that catalyzes the rate-limiting step in glycogen catabolism, the phosphorolytic cleavage of glycogen to produce glucose-1-phosphate, and plays a central role in maintaining cellular and organismal glucose homeostasis. This is Glycogen phosphorylase, muscle form from Rattus norvegicus (Rat).